An 802-amino-acid polypeptide reads, in one-letter code: Phenylalanine--tRNA ligase beta subunit (802 aa).

The 112-residue stretch at 39–150 (AKALKPFTIA…ADAPIGAAYA (112 aa)) folds into the tRNA-binding domain. Residues 400–475 (GDDRVIDFPV…RIYGVDKVPM (76 aa)) enclose the B5 domain. Residues Asp453, Asp459, Glu462, and Glu463 each coordinate Mg(2+). The FDX-ACB domain occupies 708-801 (SAFQPVSRDF…VTKKTGGTLR (94 aa)).

This sequence belongs to the phenylalanyl-tRNA synthetase beta subunit family. Type 1 subfamily. As to quaternary structure, tetramer of two alpha and two beta subunits. Mg(2+) serves as cofactor.

Its subcellular location is the cytoplasm. It catalyses the reaction tRNA(Phe) + L-phenylalanine + ATP = L-phenylalanyl-tRNA(Phe) + AMP + diphosphate + H(+). This Bradyrhizobium diazoefficiens (strain JCM 10833 / BCRC 13528 / IAM 13628 / NBRC 14792 / USDA 110) protein is Phenylalanine--tRNA ligase beta subunit.